Consider the following 171-residue polypeptide: Dual-action ribosomal maturation protein DarP (171 aa).

The disordered stretch occupies residues 1 to 30; it reads MPKRPAENPEQSDDFVSKSQKKREMAERQE.

Belongs to the DarP family.

The protein localises to the cytoplasm. In terms of biological role, member of a network of 50S ribosomal subunit biogenesis factors which assembles along the 30S-50S interface, preventing incorrect 23S rRNA structures from forming. Promotes peptidyl transferase center (PTC) maturation. In Idiomarina loihiensis (strain ATCC BAA-735 / DSM 15497 / L2-TR), this protein is Dual-action ribosomal maturation protein DarP.